A 253-amino-acid chain; its full sequence is GTP cyclohydrolase III 2 (253 aa).

Residues 102–125 (LRDAGSAQDENRQEALSHRSPPGF) are disordered.

It belongs to the archaeal-type GTP cyclohydrolase family.

It carries out the reaction GTP + 3 H2O = 2-amino-5-formylamino-6-(5-phospho-D-ribosylamino)pyrimidin-4(3H)-one + 2 phosphate + 2 H(+). In terms of biological role, catalyzes the formation of 2-amino-5-formylamino-6-ribofuranosylamino-4(3H)-pyrimidinone ribonucleotide monophosphate and inorganic phosphate from GTP. Also has an independent pyrophosphate phosphohydrolase activity. The protein is GTP cyclohydrolase III 2 (gch32) of Halobacterium salinarum (strain ATCC 700922 / JCM 11081 / NRC-1) (Halobacterium halobium).